The primary structure comprises 426 residues: Gamma-glutamyl phosphate reductase (426 aa).

The protein belongs to the gamma-glutamyl phosphate reductase family.

It is found in the cytoplasm. The enzyme catalyses L-glutamate 5-semialdehyde + phosphate + NADP(+) = L-glutamyl 5-phosphate + NADPH + H(+). The protein operates within amino-acid biosynthesis; L-proline biosynthesis; L-glutamate 5-semialdehyde from L-glutamate: step 2/2. In terms of biological role, catalyzes the NADPH-dependent reduction of L-glutamate 5-phosphate into L-glutamate 5-semialdehyde and phosphate. The product spontaneously undergoes cyclization to form 1-pyrroline-5-carboxylate. This chain is Gamma-glutamyl phosphate reductase, found in Nitrobacter winogradskyi (strain ATCC 25391 / DSM 10237 / CIP 104748 / NCIMB 11846 / Nb-255).